The following is a 645-amino-acid chain: Synaptotagmin-16 (645 aa).

Disordered regions lie at residues 102–121, 144–192, and 206–344; these read AQNSSPSLSQHAKDSCSTMS, EHHL…DSDE, and QSFR…PSGV. Residues 167-177 show a composition bias toward polar residues; sequence ETVNGKKQVNS. Residues 179–192 are compositionally biased toward acidic residues; it reads GDDEELSTSSDSDE. Residues 287–303 are compositionally biased toward polar residues; sequence HQESSVVQSLRRQSTEG. The region spanning 350-469 is the C2 1 domain; sequence KCGDLDVIFE…HPEGEMKVTL (120 aa). A disordered region spans residues 478–503; it reads SSGGSPLSPSAVSHSDSTSSTQSLSH. Residues 485-502 are compositionally biased toward low complexity; the sequence is SPSAVSHSDSTSSTQSLS. Residues 505-640 form the C2 2 domain; sequence GAPELLVGLS…TKGQQICRWH (136 aa).

Belongs to the synaptotagmin family. Homodimer. Can also form heterodimers. Expressed in brain.

May be involved in the trafficking and exocytosis of secretory vesicles in non-neuronal tissues. Is Ca(2+)-independent. The sequence is that of Synaptotagmin-16 (SYT16) from Homo sapiens (Human).